We begin with the raw amino-acid sequence, 367 residues long: 3-isopropylmalate dehydrogenase (367 aa).

75–88 (GPKWDGIERSKRPE) is an NAD(+) binding site. Residues Arg-95, Arg-105, Arg-133, and Asp-230 each contribute to the substrate site. Residues Asp-230, Asp-254, and Asp-258 each contribute to the Mg(2+) site. Position 288–300 (288–300 (GSAPDIAGQDIAN)) interacts with NAD(+).

This sequence belongs to the isocitrate and isopropylmalate dehydrogenases family. LeuB type 1 subfamily. Homodimer. Requires Mg(2+) as cofactor. Mn(2+) is required as a cofactor.

Its subcellular location is the cytoplasm. It carries out the reaction (2R,3S)-3-isopropylmalate + NAD(+) = 4-methyl-2-oxopentanoate + CO2 + NADH. Its pathway is amino-acid biosynthesis; L-leucine biosynthesis; L-leucine from 3-methyl-2-oxobutanoate: step 3/4. Catalyzes the oxidation of 3-carboxy-2-hydroxy-4-methylpentanoate (3-isopropylmalate) to 3-carboxy-4-methyl-2-oxopentanoate. The product decarboxylates to 4-methyl-2 oxopentanoate. The chain is 3-isopropylmalate dehydrogenase from Psychrobacter arcticus (strain DSM 17307 / VKM B-2377 / 273-4).